We begin with the raw amino-acid sequence, 71 residues long: Gas vesicle protein A (71 aa).

Residues 12–22 are alpha helix 1; sequence LAEVIDRILDK. A beta-strand 1 region spans residues 23–32; that stretch reads GIVIDAWVRV. The segment at 33-36 is beta turn; that stretch reads SLVG. Residues 37-46 form a beta-strand 2 region; that stretch reads IELLAIEARI. Residues 47–70 form an alpha helix 2 region; sequence VIASVETYLKYAEAVGLTQSAAVP.

This sequence belongs to the gas vesicle GvpA family. As to quaternary structure, the gas vesicle shell is 2 nm thick and consists of a single layer of this protein. It forms helical ribs nearly perpendicular to the long axis of the vesicle.

Its subcellular location is the gas vesicle shell. Functionally, gas vesicles (GV) are hollow, gas filled proteinaceous nanostructures found in some microorganisms. During planktonic growth they allow positioning of the organism at a favorable depth for light or nutrient acquisition. GVs are highly permeable to gas. GvpA forms the protein shell. The ratio of GvpA:GvpC is estimated to be 33:1 and more recently 25:1. The protein is Gas vesicle protein A of Dolichospermum flosaquae (Anabaena flos-aquae).